The sequence spans 758 residues: Thiosulfate reductase molybdopterin-containing subunit PhsA (758 aa).

The tat-type signal signal peptide spans 1 to 30 (MSISRRSFLQGVGIGCSACALGAFPPGALA). The 4Fe-4S Mo/W bis-MGD-type domain maps to 41-97 (TTLTPSLCEMCSFRCPIQAQVVNNKTVFIQGNPSAPQQGTRICARGGSGVSLVNDPQ). Residues Cys-48, Cys-51, Cys-55, and Cys-83 each coordinate [4Fe-4S] cluster.

It belongs to the prokaryotic molybdopterin-containing oxidoreductase family. Composed of three subunits: PhsA, PhsB and PhsC. [4Fe-4S] cluster serves as cofactor. The cofactor is Mo-bis(molybdopterin guanine dinucleotide). In terms of processing, predicted to be exported by the Tat system. The position of the signal peptide cleavage has not been experimentally proven.

It localises to the periplasm. It carries out the reaction a quinone + hydrogen sulfide + sulfite + 2 H(+) = thiosulfate + a quinol. Its function is as follows. Component of the PhsABC thiosulfate reductase that catalyzes the reduction of thiosulfate to sulfite and hydrogen sulfide, with menaquinol as the sole electron donor. Proton motive force (PMF) is required to drive transmembrane electron transfer within the reductase. The PhsA subunit contains the active site molybdenum-bis(molybdopterin guanine dinucleotide) (Mo-bis-MGD) cofactor. This chain is Thiosulfate reductase molybdopterin-containing subunit PhsA, found in Salmonella typhimurium (strain LT2 / SGSC1412 / ATCC 700720).